We begin with the raw amino-acid sequence, 275 residues long: Bis(5'-nucleosyl)-tetraphosphatase, symmetrical (275 aa).

It belongs to the Ap4A hydrolase family.

It carries out the reaction P(1),P(4)-bis(5'-adenosyl) tetraphosphate + H2O = 2 ADP + 2 H(+). Hydrolyzes diadenosine 5',5'''-P1,P4-tetraphosphate to yield ADP. This is Bis(5'-nucleosyl)-tetraphosphatase, symmetrical (apaH) from Aggregatibacter actinomycetemcomitans (Actinobacillus actinomycetemcomitans).